Reading from the N-terminus, the 55-residue chain is Small ribosomal subunit protein bS21 (55 aa).

Belongs to the bacterial ribosomal protein bS21 family.

The polypeptide is Small ribosomal subunit protein bS21 (Ureaplasma parvum serovar 3 (strain ATCC 27815 / 27 / NCTC 11736)).